A 487-amino-acid chain; its full sequence is GTPase Der (487 aa).

2 consecutive EngA-type G domains span residues proline 3–alanine 166 and isoleucine 193–valine 366. GTP-binding positions include glycine 9–serine 16, aspartate 56–isoleucine 60, asparagine 118–aspartate 121, glycine 199–serine 206, aspartate 246–valine 250, and asparagine 311–aspartate 314. In terms of domain architecture, KH-like spans threonine 367–glutamate 451. Positions lysine 448–leucine 461 are enriched in basic and acidic residues. Positions lysine 448–arginine 487 are disordered. A compositionally biased stretch (basic residues) spans asparagine 467–arginine 487.

Belongs to the TRAFAC class TrmE-Era-EngA-EngB-Septin-like GTPase superfamily. EngA (Der) GTPase family. In terms of assembly, associates with the 50S ribosomal subunit.

Functionally, GTPase that plays an essential role in the late steps of ribosome biogenesis. This chain is GTPase Der, found in Pseudomonas putida (strain ATCC 700007 / DSM 6899 / JCM 31910 / BCRC 17059 / LMG 24140 / F1).